We begin with the raw amino-acid sequence, 100 residues long: Co-chaperonin GroES (100 aa).

The protein belongs to the GroES chaperonin family. Heptamer of 7 subunits arranged in a ring. Interacts with the chaperonin GroEL.

It localises to the cytoplasm. In terms of biological role, together with the chaperonin GroEL, plays an essential role in assisting protein folding. The GroEL-GroES system forms a nano-cage that allows encapsulation of the non-native substrate proteins and provides a physical environment optimized to promote and accelerate protein folding. GroES binds to the apical surface of the GroEL ring, thereby capping the opening of the GroEL channel. The polypeptide is Co-chaperonin GroES (Mycolicibacterium smegmatis (strain ATCC 700084 / mc(2)155) (Mycobacterium smegmatis)).